The primary structure comprises 448 residues: ATP-dependent protease ATPase subunit HslU (448 aa).

Residues isoleucine 23, 65–70, aspartate 263, glutamate 327, and arginine 399 each bind ATP; that span reads GIGKTE.

Belongs to the ClpX chaperone family. HslU subfamily. As to quaternary structure, a double ring-shaped homohexamer of HslV is capped on each side by a ring-shaped HslU homohexamer. The assembly of the HslU/HslV complex is dependent on binding of ATP.

The protein localises to the cytoplasm. Functionally, ATPase subunit of a proteasome-like degradation complex; this subunit has chaperone activity. The binding of ATP and its subsequent hydrolysis by HslU are essential for unfolding of protein substrates subsequently hydrolyzed by HslV. HslU recognizes the N-terminal part of its protein substrates and unfolds these before they are guided to HslV for hydrolysis. The polypeptide is ATP-dependent protease ATPase subunit HslU (Borreliella burgdorferi (strain ATCC 35210 / DSM 4680 / CIP 102532 / B31) (Borrelia burgdorferi)).